A 460-amino-acid chain; its full sequence is NADH-ubiquinone oxidoreductase chain 4 (460 aa).

Helical transmembrane passes span 22–42 (WLWPTALTQSMLIALGSITWL), 61–81 (PLSTPLLVLSCWLLPLMLLAS), 94–113 (RMYITLLATLQLFLILAFGA), 117–139 (IMFYVMFEATLIPTLLVITRWGN), 148–168 (TYFLFYTLAGSLPLLVALLML), 195–217 (IWWAACMIAFLVKMPLYGMHLWL), 225–245 (PVAGSMVLAAVLLKLGGYGMM), 258–278 (MVYPFIVLALWGVIITGSICL), 285–304 (SLIAYSSVSHMGLVAGGILI), 308–330 (WGFTGALILMIAHGLASSALFCL), 351–371 (IALPLMTTWWFIASLANLALP), 394–414 (LILTGIGTLITAAYSLYMFLM), and 436–456 (LLMALHLIPLLLIILKPALLW).

This sequence belongs to the complex I subunit 4 family.

The protein resides in the mitochondrion membrane. The catalysed reaction is a ubiquinone + NADH + 5 H(+)(in) = a ubiquinol + NAD(+) + 4 H(+)(out). Functionally, core subunit of the mitochondrial membrane respiratory chain NADH dehydrogenase (Complex I) that is believed to belong to the minimal assembly required for catalysis. Complex I functions in the transfer of electrons from NADH to the respiratory chain. The immediate electron acceptor for the enzyme is believed to be ubiquinone. The protein is NADH-ubiquinone oxidoreductase chain 4 (MT-ND4) of Gadus morhua (Atlantic cod).